Here is a 283-residue protein sequence, read N- to C-terminus: Pantothenate synthetase (283 aa).

Position 30-37 (30-37 (MGYLHDGH)) interacts with ATP. The Proton donor role is filled by His-37. A (R)-pantoate-binding site is contributed by Gln-61. Gln-61 lines the beta-alanine pocket. 147–150 (GKKD) serves as a coordination point for ATP. Position 153 (Gln-153) interacts with (R)-pantoate. ATP is bound by residues Ile-176 and 184 to 187 (MSSR).

The protein belongs to the pantothenate synthetase family. As to quaternary structure, homodimer.

It localises to the cytoplasm. It carries out the reaction (R)-pantoate + beta-alanine + ATP = (R)-pantothenate + AMP + diphosphate + H(+). Its pathway is cofactor biosynthesis; (R)-pantothenate biosynthesis; (R)-pantothenate from (R)-pantoate and beta-alanine: step 1/1. Its function is as follows. Catalyzes the condensation of pantoate with beta-alanine in an ATP-dependent reaction via a pantoyl-adenylate intermediate. This Geobacter sulfurreducens (strain ATCC 51573 / DSM 12127 / PCA) protein is Pantothenate synthetase.